We begin with the raw amino-acid sequence, 207 residues long: DNA protection during starvation protein 1 (207 aa).

The segment covering 1 to 12 (MTKKSTKSEAAS) has biased composition (basic and acidic residues). Positions 1 to 31 (MTKKSTKSEAASKTKKSGVPETGAQGVRAGG) are disordered. Histidine 83, aspartate 110, and glutamate 114 together coordinate Fe cation.

The protein belongs to the Dps family. The 12 subunits form a hollow sphere into which the mineral iron core of up to 500 Fe(3+) can be deposited. The homododecameric forms at higher concentration of salt, the homodimeric form under reducing, low-salt conditions. The assembly of the dodecamer is irreversible.

The protein localises to the cytoplasm. It is found in the nucleoid. It carries out the reaction 2 Fe(2+) + H2O2 + 2 H(+) = 2 Fe(3+) + 2 H2O. In terms of biological role, protects DNA from oxidative damage by sequestering intracellular Fe(2+) ion and storing it in the form of Fe(3+) oxyhydroxide mineral. One hydrogen peroxide oxidizes two Fe(2+) ions, which prevents hydroxyl radical production by the Fenton reaction. Both oligomeric forms of dps exhibit ferroxidase activity and DNA binding. Dodecameric dps is capable of Fe(2+) oxidation/mineralization. Only dimeric dps affords efficient DNA protection against hydroxyl radical-mediated cleavage. The polypeptide is DNA protection during starvation protein 1 (dps1) (Deinococcus radiodurans (strain ATCC 13939 / DSM 20539 / JCM 16871 / CCUG 27074 / LMG 4051 / NBRC 15346 / NCIMB 9279 / VKM B-1422 / R1)).